Here is a 908-residue protein sequence, read N- to C-terminus: Vacuolar membrane protease (908 aa).

The disordered stretch occupies residues 1-25 (MTSGEEEEGTREQVPVSQPTGTTSI). The Cytoplasmic portion of the chain corresponds to 1-48 (MTSGEEEEGTREQVPVSQPTGTTSIVSTKEKQPNIFIRAIRATFGYRK). A compositionally biased stretch (polar residues) spans 15-25 (PVSQPTGTTSI). Residues 49 to 69 (TSLTLFVLLTIFFTVAFSSYD) form a helical membrane-spanning segment. Topologically, residues 70-381 (NSLDFTIDLP…FSTSVTTLNT (312 aa)) are vacuolar. N-linked (GlcNAc...) asparagine glycosylation is found at Asn143 and Asn162. Residues His176 and Asp188 each coordinate Zn(2+). Catalysis depends on Glu221, which acts as the Proton acceptor. 3 residues coordinate Zn(2+): Glu222, Glu247, and His319. Residue Asn354 is glycosylated (N-linked (GlcNAc...) asparagine). The helical transmembrane segment at 382 to 402 (INMVLIVLFPVLSGPLLFITV) threads the bilayer. The Cytoplasmic portion of the chain corresponds to 403-411 (RYKKWNIGT). A helical transmembrane segment spans residues 412–432 (ANLFSLPLAIVITSLVGAVVV). Residues 433–449 (NQGFRLVNEFLPASRPM) are Vacuolar-facing. Residues 450 to 470 (LLVTTTTSILLLTYYILLNGI) traverse the membrane as a helical segment. Topologically, residues 471–480 (NFVSPSGDQK) are cytoplasmic. Residues 481-501 (LVSIIQISFIYWIALIFVTRG) form a helical membrane-spanning segment. The Vacuolar segment spans residues 502–514 (LSQNAIGDDHTGE). The helical transmembrane segment at 515–535 (FAFTILFLLEATASLFGLIGW) threads the bilayer. The Cytoplasmic portion of the chain corresponds to 536–602 (TFTRSVKEPT…MQHFGYDWSL (67 aa)). Residues 543–584 (EPTGDEEPLLNGRMERYVDGSDDEDDVEEEDDEDQSEEENHQ) are disordered. The segment covering 562–579 (GSDDEDDVEEEDDEDQSE) has biased composition (acidic residues). The helical transmembrane segment at 603–623 (QFLLIVPISSLVIYNSGWLVI) threads the bilayer. At 624–638 (DGINKSIQESLVAEN) the chain is on the vacuolar side. Asn627 is a glycosylation site (N-linked (GlcNAc...) asparagine). Residues 639-659 (FIYLIIQLFSQFWILPILPFV) traverse the membrane as a helical segment. The Cytoplasmic segment spans residues 660 to 664 (YKLNR). A helical transmembrane segment spans residues 665-685 (FMVLGLIAFALVGVTLISSVD). Residues 686 to 908 (PFNQDNPLKL…LVSLTNRIEV (223 aa)) lie on the Vacuolar side of the membrane. N-linked (GlcNAc...) asparagine glycans are attached at residues Asn752 and Asn764.

The protein belongs to the peptidase M28 family. Requires Zn(2+) as cofactor.

It is found in the vacuole membrane. Its function is as follows. May be involved in vacuolar sorting and osmoregulation. The polypeptide is Vacuolar membrane protease (Candida tropicalis (strain ATCC MYA-3404 / T1) (Yeast)).